We begin with the raw amino-acid sequence, 379 residues long: Putative acetyl-CoA C-acetyltransferase VraB (379 aa).

Catalysis depends on C86, which acts as the Acyl-thioester intermediate. The active-site Proton acceptor is the H338.

The protein belongs to the thiolase-like superfamily. Thiolase family.

The chain is Putative acetyl-CoA C-acetyltransferase VraB (vraB) from Staphylococcus aureus (strain MSSA476).